Reading from the N-terminus, the 350-residue chain is DNA-directed RNA polymerase subunit alpha (350 aa).

The segment at 1-226 (MLISQRPTLS…ELFGLARELN (226 aa)) is alpha N-terminal domain (alpha-NTD). Residues 241-350 (ADHIASFALP…NQDYAETEQL (110 aa)) are alpha C-terminal domain (alpha-CTD). The tract at residues 328–350 (GTWTSDAGYDLDDNQDYAETEQL) is disordered. The span at 336-350 (YDLDDNQDYAETEQL) shows a compositional bias: acidic residues.

This sequence belongs to the RNA polymerase alpha chain family. As to quaternary structure, homodimer. The RNAP catalytic core consists of 2 alpha, 1 beta, 1 beta' and 1 omega subunit. When a sigma factor is associated with the core the holoenzyme is formed, which can initiate transcription.

The enzyme catalyses RNA(n) + a ribonucleoside 5'-triphosphate = RNA(n+1) + diphosphate. DNA-dependent RNA polymerase catalyzes the transcription of DNA into RNA using the four ribonucleoside triphosphates as substrates. The polypeptide is DNA-directed RNA polymerase subunit alpha (Mycolicibacterium smegmatis (strain ATCC 700084 / mc(2)155) (Mycobacterium smegmatis)).